Here is a 236-residue protein sequence, read N- to C-terminus: 2,3,4,5-tetrahydropyridine-2,6-dicarboxylate N-acetyltransferase (236 aa).

The protein belongs to the transferase hexapeptide repeat family. DapH subfamily.

The catalysed reaction is (S)-2,3,4,5-tetrahydrodipicolinate + acetyl-CoA + H2O = L-2-acetamido-6-oxoheptanedioate + CoA. It functions in the pathway amino-acid biosynthesis; L-lysine biosynthesis via DAP pathway; LL-2,6-diaminopimelate from (S)-tetrahydrodipicolinate (acetylase route): step 1/3. Its function is as follows. Catalyzes the transfer of an acetyl group from acetyl-CoA to tetrahydrodipicolinate. The protein is 2,3,4,5-tetrahydropyridine-2,6-dicarboxylate N-acetyltransferase of Lactobacillus helveticus (strain DPC 4571).